The primary structure comprises 155 residues: NADPH-dependent 7-cyano-7-deazaguanine reductase (155 aa).

Residues Met-1–Ala-20 show a composition bias toward polar residues. A disordered region spans residues Met-1–Ala-26. Cys-53 serves as the catalytic Thioimide intermediate. Residue Asp-60 is the Proton donor of the active site. Residues Val-75–Ser-77 and His-94–Glu-95 contribute to the substrate site.

The protein belongs to the GTP cyclohydrolase I family. QueF type 1 subfamily.

The protein localises to the cytoplasm. It carries out the reaction 7-aminomethyl-7-carbaguanine + 2 NADP(+) = 7-cyano-7-deazaguanine + 2 NADPH + 3 H(+). It functions in the pathway tRNA modification; tRNA-queuosine biosynthesis. Its function is as follows. Catalyzes the NADPH-dependent reduction of 7-cyano-7-deazaguanine (preQ0) to 7-aminomethyl-7-deazaguanine (preQ1). The sequence is that of NADPH-dependent 7-cyano-7-deazaguanine reductase from Rhizobium etli (strain CIAT 652).